The primary structure comprises 272 residues: Pantothenate synthetase (272 aa).

Residue 27–34 (MGALHNGH) participates in ATP binding. Residue histidine 34 is the Proton donor of the active site. Residue glutamine 58 participates in (R)-pantoate binding. Glutamine 58 serves as a coordination point for beta-alanine. Residue 143 to 146 (GKKD) participates in ATP binding. A (R)-pantoate-binding site is contributed by glutamine 149. ATP contacts are provided by residues valine 172 and 180-183 (LSSR).

Belongs to the pantothenate synthetase family. In terms of assembly, homodimer.

Its subcellular location is the cytoplasm. It catalyses the reaction (R)-pantoate + beta-alanine + ATP = (R)-pantothenate + AMP + diphosphate + H(+). Its pathway is cofactor biosynthesis; (R)-pantothenate biosynthesis; (R)-pantothenate from (R)-pantoate and beta-alanine: step 1/1. Catalyzes the condensation of pantoate with beta-alanine in an ATP-dependent reaction via a pantoyl-adenylate intermediate. The polypeptide is Pantothenate synthetase (Aliarcobacter butzleri (strain RM4018) (Arcobacter butzleri)).